A 469-amino-acid polypeptide reads, in one-letter code: Glutamate--tRNA ligase (469 aa).

The 'HIGH' region motif lies at 11–21; it reads PSPTGFIHLGN. Residues 118–131 show a composition bias toward basic and acidic residues; that stretch reads GEKPRYDGTWRPEP. The segment at 118 to 138 is disordered; the sequence is GEKPRYDGTWRPEPGKVLPEP. The 'KMSKS' region motif lies at 243 to 247; the sequence is KMSKR. Lysine 246 lines the ATP pocket.

It belongs to the class-I aminoacyl-tRNA synthetase family. Glutamate--tRNA ligase type 1 subfamily. In terms of assembly, monomer.

It is found in the cytoplasm. It catalyses the reaction tRNA(Glu) + L-glutamate + ATP = L-glutamyl-tRNA(Glu) + AMP + diphosphate. In terms of biological role, catalyzes the attachment of glutamate to tRNA(Glu) in a two-step reaction: glutamate is first activated by ATP to form Glu-AMP and then transferred to the acceptor end of tRNA(Glu). This chain is Glutamate--tRNA ligase, found in Burkholderia vietnamiensis (strain G4 / LMG 22486) (Burkholderia cepacia (strain R1808)).